The sequence spans 465 residues: Uronate isomerase (465 aa).

It belongs to the metallo-dependent hydrolases superfamily. Uronate isomerase family.

It carries out the reaction D-glucuronate = D-fructuronate. The enzyme catalyses aldehydo-D-galacturonate = keto-D-tagaturonate. It functions in the pathway carbohydrate metabolism; pentose and glucuronate interconversion. The protein is Uronate isomerase of Streptococcus equi subsp. zooepidemicus (strain MGCS10565).